We begin with the raw amino-acid sequence, 55 residues long: MAKAVTIKIKLVSTADTGFYYVTKKNSRTMTDKMTKKKYDPVARKHVEFKEAKIK.

It belongs to the bacterial ribosomal protein bL33 family.

This chain is Large ribosomal subunit protein bL33, found in Rhodopseudomonas palustris (strain BisB5).